Reading from the N-terminus, the 287-residue chain is ATP synthase gamma chain (287 aa).

The protein belongs to the ATPase gamma chain family. F-type ATPases have 2 components, CF(1) - the catalytic core - and CF(0) - the membrane proton channel. CF(1) has five subunits: alpha(3), beta(3), gamma(1), delta(1), epsilon(1). CF(0) has three main subunits: a, b and c.

The protein resides in the cell inner membrane. Produces ATP from ADP in the presence of a proton gradient across the membrane. The gamma chain is believed to be important in regulating ATPase activity and the flow of protons through the CF(0) complex. This Alkalilimnicola ehrlichii (strain ATCC BAA-1101 / DSM 17681 / MLHE-1) protein is ATP synthase gamma chain.